The chain runs to 872 residues: Protein translocase subunit SecA (872 aa).

Residues Q87, 105–109, and D510 contribute to the ATP site; that span reads GEGKT. Zn(2+) contacts are provided by C847, C849, C858, and C859.

The protein belongs to the SecA family. Monomer and homodimer. Part of the essential Sec protein translocation apparatus which comprises SecA, SecYEG and auxiliary proteins SecDF-YajC and YidC. It depends on Zn(2+) as a cofactor.

Its subcellular location is the cell inner membrane. The protein localises to the cytoplasm. It catalyses the reaction ATP + H2O + cellular proteinSide 1 = ADP + phosphate + cellular proteinSide 2.. Its function is as follows. Part of the Sec protein translocase complex. Interacts with the SecYEG preprotein conducting channel. Has a central role in coupling the hydrolysis of ATP to the transfer of proteins into and across the cell membrane, serving as an ATP-driven molecular motor driving the stepwise translocation of polypeptide chains across the membrane. In Aliarcobacter butzleri (strain RM4018) (Arcobacter butzleri), this protein is Protein translocase subunit SecA.